Here is an 87-residue protein sequence, read N- to C-terminus: Small ribosomal subunit protein bS20 (87 aa).

This sequence belongs to the bacterial ribosomal protein bS20 family.

Binds directly to 16S ribosomal RNA. In Roseobacter denitrificans (strain ATCC 33942 / OCh 114) (Erythrobacter sp. (strain OCh 114)), this protein is Small ribosomal subunit protein bS20.